Here is a 780-residue protein sequence, read N- to C-terminus: Protein SEY1 (780 aa).

Residues 1–680 are Cytoplasmic-facing; that stretch reads MDSKEEAIQL…KRSMIKTTTH (680 aa). The GB1/RHD3-type G domain occupies 35–265; it reads GVNYHVISVF…NEDYYFKPEY (231 aa). 45-52 contacts GTP; sequence GSQSSGKS. The stretch at 440–463 forms a coiled coil; sequence EVKEEVVKRFENDLKETSDKLRVT. A helical transmembrane segment spans residues 681–701; that stretch reads IPLWIYAIIVVLGWNEFMMVI. Residues 702 to 704 lie on the Lumenal side of the membrane; it reads RNP. The chain crosses the membrane as a helical span at residues 705–725; that stretch reads LFVTLTILILVSFYFINKFDL. The Cytoplasmic segment spans residues 726 to 780; that stretch reads WGPVKSVAQTAAGETIGTIKTKLRDFVLEEHEKTPKIQSEKSNSDSEKVVENEKS. A disordered region spans residues 756–780; that stretch reads HEKTPKIQSEKSNSDSEKVVENEKS.

Belongs to the TRAFAC class dynamin-like GTPase superfamily. GB1/RHD3 GTPase family. RHD3 subfamily.

It localises to the endoplasmic reticulum membrane. Functionally, cooperates with the reticulon proteins and tubule-shaping DP1 family proteins to generate and maintain the structure of the tubular endoplasmic reticulum network. Has GTPase activity, which is required for its function in ER organization. The protein is Protein SEY1 of Vanderwaltozyma polyspora (strain ATCC 22028 / DSM 70294 / BCRC 21397 / CBS 2163 / NBRC 10782 / NRRL Y-8283 / UCD 57-17) (Kluyveromyces polysporus).